Reading from the N-terminus, the 388-residue chain is Probable protein phosphatase 2C 43 (388 aa).

The 300-residue stretch at 53–352 (EFSFAVVQAN…DDITVVVVFI (300 aa)) folds into the PPM-type phosphatase domain. Residues Asp84, Gly85, Asp284, and Asp343 each coordinate Mn(2+).

Belongs to the PP2C family. Mg(2+) serves as cofactor. Mn(2+) is required as a cofactor.

The catalysed reaction is O-phospho-L-seryl-[protein] + H2O = L-seryl-[protein] + phosphate. The enzyme catalyses O-phospho-L-threonyl-[protein] + H2O = L-threonyl-[protein] + phosphate. In Oryza sativa subsp. japonica (Rice), this protein is Probable protein phosphatase 2C 43.